The primary structure comprises 304 residues: Light-independent protochlorophyllide reductase iron-sulfur ATP-binding protein (304 aa).

Residues 46–51 (GIGKST) and lysine 75 each bind ATP. Serine 50 serves as a coordination point for Mg(2+). Positions 131 and 165 each coordinate [4Fe-4S] cluster. ATP-binding positions include 216-217 (NR) and 240-242 (PDL).

It belongs to the NifH/BchL/ChlL family. In terms of assembly, homodimer. Protochlorophyllide reductase is composed of three subunits; BchL, BchN and BchB. The cofactor is [4Fe-4S] cluster.

The enzyme catalyses chlorophyllide a + oxidized 2[4Fe-4S]-[ferredoxin] + 2 ADP + 2 phosphate = protochlorophyllide a + reduced 2[4Fe-4S]-[ferredoxin] + 2 ATP + 2 H2O. It participates in porphyrin-containing compound metabolism; bacteriochlorophyll biosynthesis (light-independent). In terms of biological role, component of the dark-operative protochlorophyllide reductase (DPOR) that uses Mg-ATP and reduced ferredoxin to reduce ring D of protochlorophyllide (Pchlide) to form chlorophyllide a (Chlide). This reaction is light-independent. The L component serves as a unique electron donor to the NB-component of the complex, and binds Mg-ATP. The sequence is that of Light-independent protochlorophyllide reductase iron-sulfur ATP-binding protein from Rhodobacter capsulatus (strain ATCC BAA-309 / NBRC 16581 / SB1003).